The chain runs to 445 residues: Histidinol dehydrogenase (445 aa).

NAD(+) contacts are provided by Y130, Q192, and N215. Residues S238, Q260, and H263 each coordinate substrate. Q260 and H263 together coordinate Zn(2+). Active-site proton acceptor residues include E328 and H329. Positions 329, 362, 416, and 421 each coordinate substrate. D362 provides a ligand contact to Zn(2+). Residue H421 coordinates Zn(2+).

Belongs to the histidinol dehydrogenase family. Zn(2+) serves as cofactor.

The catalysed reaction is L-histidinol + 2 NAD(+) + H2O = L-histidine + 2 NADH + 3 H(+). Its pathway is amino-acid biosynthesis; L-histidine biosynthesis; L-histidine from 5-phospho-alpha-D-ribose 1-diphosphate: step 9/9. Its function is as follows. Catalyzes the sequential NAD-dependent oxidations of L-histidinol to L-histidinaldehyde and then to L-histidine. This Gloeobacter violaceus (strain ATCC 29082 / PCC 7421) protein is Histidinol dehydrogenase.